Consider the following 486-residue polypeptide: MVATPSTSSQTKGVVRQVIGPVLDVEFPAGKLPKILNALRIEAKNPAGQEIALTAEVQQLLGDHRVRAVAMSGTDGLVRGMEAVDTGAPISVPVGEATLGRIFNVLGEPVDEQGPVKTKDTAPIHRAAPKLTDLETKPKVFETGIKVIDLLAPYRQGGKVGLFGGAGVGKTVLIQELINNIAKEHGGVSVFGGVGERTREGNDLYEEFKESGVINADDLTQSKVALCFGQMNEPPGARMRVGLSALTMAEHFRDVNKQDVLLFVDNIFRFVQAGSEVSALLGRMPSAVGYQPTLGTDVGELQERITSTLEGSITSIQAVYVPADDLTDPAPATTFAHLDATTVLARALAAKGIYPAVDPLDSTSTMLQPSVVGDEHYKTARAVQSTLQRYKELQDIIAILGLDELSEEDRLTVDRARKIEKFLSQPFFVAEIFTGMSGKYVKLEETIAGFNMILSGELDDLPEQAFYLVGNIDEVKAKAEKLKSEK.

Residue 164 to 171 (GGAGVGKT) participates in ATP binding.

Belongs to the ATPase alpha/beta chains family. F-type ATPases have 2 components, CF(1) - the catalytic core - and CF(0) - the membrane proton channel. CF(1) has five subunits: alpha(3), beta(3), gamma(1), delta(1), epsilon(1). CF(0) has four main subunits: a(1), b(1), b'(1) and c(9-12).

The protein resides in the cellular thylakoid membrane. The enzyme catalyses ATP + H2O + 4 H(+)(in) = ADP + phosphate + 5 H(+)(out). In terms of biological role, produces ATP from ADP in the presence of a proton gradient across the membrane. The catalytic sites are hosted primarily by the beta subunits. The chain is ATP synthase subunit beta from Prochlorococcus marinus (strain MIT 9312).